Reading from the N-terminus, the 656-residue chain is Chaperone protein HtpG (656 aa).

An a; substrate-binding region spans residues 1-364; sequence MSEQNPTDSK…SADLPLNVSR (364 aa). A b region spans residues 365-583; sequence EILQESRDVK…EGELSPQMIQ (219 aa). Residues 584-656 form a c region; it reads MLKQMGQDVP…LRRVNELLMK (73 aa).

This sequence belongs to the heat shock protein 90 family. Homodimer.

It localises to the cytoplasm. Functionally, molecular chaperone. Has ATPase activity. The chain is Chaperone protein HtpG from Psychrobacter arcticus (strain DSM 17307 / VKM B-2377 / 273-4).